The chain runs to 196 residues: Nucleoside triphosphate pyrophosphatase (196 aa).

Asp-72 acts as the Proton acceptor in catalysis.

The protein belongs to the Maf family. It depends on a divalent metal cation as a cofactor.

It localises to the cytoplasm. The enzyme catalyses a ribonucleoside 5'-triphosphate + H2O = a ribonucleoside 5'-phosphate + diphosphate + H(+). It catalyses the reaction a 2'-deoxyribonucleoside 5'-triphosphate + H2O = a 2'-deoxyribonucleoside 5'-phosphate + diphosphate + H(+). In terms of biological role, nucleoside triphosphate pyrophosphatase. May have a dual role in cell division arrest and in preventing the incorporation of modified nucleotides into cellular nucleic acids. The polypeptide is Nucleoside triphosphate pyrophosphatase (Chlamydia muridarum (strain MoPn / Nigg)).